The following is a 128-amino-acid chain: Large ribosomal subunit protein bL20 (128 aa).

The protein belongs to the bacterial ribosomal protein bL20 family.

In terms of biological role, binds directly to 23S ribosomal RNA and is necessary for the in vitro assembly process of the 50S ribosomal subunit. It is not involved in the protein synthesizing functions of that subunit. The polypeptide is Large ribosomal subunit protein bL20 (Micrococcus luteus (strain ATCC 4698 / DSM 20030 / JCM 1464 / CCM 169 / CCUG 5858 / IAM 1056 / NBRC 3333 / NCIMB 9278 / NCTC 2665 / VKM Ac-2230) (Micrococcus lysodeikticus)).